The primary structure comprises 278 residues: HTH-type transcriptional regulator HdfR (278 aa).

The 58-residue stretch at 1–58 folds into the HTH lysR-type domain; sequence MDTELLKTFLEVSRTRHFGRAAEALYLTQSAVSFRIRQLENQLGVNLFTRHRNNIRLT. The H-T-H motif DNA-binding region spans 18–37; that stretch reads FGRAAEALYLTQSAVSFRIR.

This sequence belongs to the LysR transcriptional regulatory family.

Its function is as follows. Negatively regulates the transcription of the flagellar master operon flhDC by binding to the upstream region of the operon. The polypeptide is HTH-type transcriptional regulator HdfR (Salmonella newport (strain SL254)).